The primary structure comprises 42 residues: Large ribosomal subunit protein bL36 (42 aa).

The protein belongs to the bacterial ribosomal protein bL36 family.

This chain is Large ribosomal subunit protein bL36, found in Ehrlichia canis (strain Jake).